Consider the following 168-residue polypeptide: NADH-quinone oxidoreductase subunit I (168 aa).

4Fe-4S ferredoxin-type domains lie at 58 to 88 (LRTYKNGEERCIACKLCEAICPAQAITIEAQ) and 99 to 128 (VRYDIDMTKCIYCGFCQEACPVDAIVEGPN). Positions 68, 71, 74, 78, 108, 111, 114, and 118 each coordinate [4Fe-4S] cluster.

The protein belongs to the complex I 23 kDa subunit family. NDH-1 is composed of 14 different subunits. Subunits NuoA, H, J, K, L, M, N constitute the membrane sector of the complex. [4Fe-4S] cluster serves as cofactor.

The protein resides in the cell inner membrane. The enzyme catalyses a quinone + NADH + 5 H(+)(in) = a quinol + NAD(+) + 4 H(+)(out). Functionally, NDH-1 shuttles electrons from NADH, via FMN and iron-sulfur (Fe-S) centers, to quinones in the respiratory chain. The immediate electron acceptor for the enzyme in this species is believed to be ubiquinone. Couples the redox reaction to proton translocation (for every two electrons transferred, four hydrogen ions are translocated across the cytoplasmic membrane), and thus conserves the redox energy in a proton gradient. The polypeptide is NADH-quinone oxidoreductase subunit I (Ehrlichia ruminantium (strain Gardel)).